Here is a 398-residue protein sequence, read N- to C-terminus: MPRPGHPRPASGPPRLGPWERPTELCLETYDKPPQPPPSRRTRRPDPKDPGHHGPESITFISGSAEPALESPTCCLLWRPWVWEWCRAAFCFRRCRDCLQRCGACVRGCSPCLSTEDSTEGTAEANWAKEHNGVPPSPDRAPPSRRDGQRLKSTMGSSFSYPDVKLKGIPVYPYPRATSPAPDADSCCKEPLADPPPMRHSLPSTFASSPRGSEEYYSFHESDLDLPEMGSGSMSSREIDVLIFKKLTELFSVHQIDELAKCTSDTVFLEKTSKISDLISSITQDYHLDEQDAEGRLVRGIIRISTRKSRARPQTSEGRSTRAAAPTAAAPDSGHETMVGSGLSQDELTVQISQETTADAIARKLRPYGAPGYPASHDSSFQGTDTDSSGAPLLQVYC.

Disordered regions lie at residues 1 to 60 and 123 to 156; these read MPRP…SITF and AEAN…STMG. The segment covering 44–55 has biased composition (basic and acidic residues); it reads RPDPKDPGHHGP. Ser218 carries the post-translational modification Phosphoserine. Disordered stretches follow at residues 307 to 340 and 369 to 392; these read RKSR…TMVG and GAPG…SGAP. The span at 377 to 389 shows a compositional bias: polar residues; that stretch reads HDSSFQGTDTDSS.

The protein resides in the cytoplasm. It localises to the cell junction. In terms of biological role, plays a role in the regulation of the epidermis formation during early development. Required both as an inhibitor of basal cell proliferation and a promoter of differentiation of basal progenitor cell progeny. In Homo sapiens (Human), this protein is Keratinocyte differentiation factor 1 (KDF1).